A 125-amino-acid polypeptide reads, in one-letter code: Large ribosomal subunit protein eL31 (125 aa).

It belongs to the eukaryotic ribosomal protein eL31 family. Component of the large ribosomal subunit.

It is found in the cytoplasm. Component of the large ribosomal subunit. The ribosome is a large ribonucleoprotein complex responsible for the synthesis of proteins in the cell. The polypeptide is Large ribosomal subunit protein eL31 (rpl31) (Ictalurus punctatus (Channel catfish)).